Here is a 405-residue protein sequence, read N- to C-terminus: Tryptophan synthase beta chain (405 aa).

An N6-(pyridoxal phosphate)lysine modification is found at lysine 98.

It belongs to the TrpB family. Tetramer of two alpha and two beta chains. Pyridoxal 5'-phosphate serves as cofactor.

The enzyme catalyses (1S,2R)-1-C-(indol-3-yl)glycerol 3-phosphate + L-serine = D-glyceraldehyde 3-phosphate + L-tryptophan + H2O. It functions in the pathway amino-acid biosynthesis; L-tryptophan biosynthesis; L-tryptophan from chorismate: step 5/5. The beta subunit is responsible for the synthesis of L-tryptophan from indole and L-serine. The chain is Tryptophan synthase beta chain from Bradyrhizobium diazoefficiens (strain JCM 10833 / BCRC 13528 / IAM 13628 / NBRC 14792 / USDA 110).